Consider the following 604-residue polypeptide: Deuterosome assembly protein 1 (604 aa).

Coiled coils occupy residues 14–59 (CEAE…NAQT), 85–197 (MTQN…GKKQ), 226–278 (IIEK…ELQS), and 336–399 (QDQP…KQLK). The residue at position 547 (S547) is a Phosphoserine. Residues 558-601 (AAQHFLLEEEKRAKELEKLLNTHIDELQRHTEFTLNKYSKLKQN) are a coiled coil.

The protein belongs to the CEP63 family. As to quaternary structure, interacts with CEP152; the interaction is mutually exclusive with CEP63.

The protein resides in the cytoplasm. In terms of biological role, key structural component of the deuterosome, a structure that promotes de novo centriole amplification in multiciliated cells. Deuterosome-mediated centriole amplification occurs in terminally differentiated multiciliated cells and can generate more than 100 centrioles. Probably sufficient for the specification and formation of the deuterosome inner core. Interacts with CEP152 and recruits PLK4 to activate centriole biogenesis. The polypeptide is Deuterosome assembly protein 1 (Homo sapiens (Human)).